We begin with the raw amino-acid sequence, 260 residues long: Ribosomal RNA small subunit methyltransferase J (260 aa).

S-adenosyl-L-methionine-binding positions include 101-102, 117-118, 153-154, and Asp176; these read RD, ER, and SS.

It belongs to the methyltransferase superfamily. RsmJ family.

It is found in the cytoplasm. The catalysed reaction is guanosine(1516) in 16S rRNA + S-adenosyl-L-methionine = N(2)-methylguanosine(1516) in 16S rRNA + S-adenosyl-L-homocysteine + H(+). Functionally, specifically methylates the guanosine in position 1516 of 16S rRNA. The chain is Ribosomal RNA small subunit methyltransferase J from Aliivibrio salmonicida (strain LFI1238) (Vibrio salmonicida (strain LFI1238)).